A 141-amino-acid polypeptide reads, in one-letter code: MEMLQGLLLWLLLSVGGVWASRGPLRPLCRPINATLAAENEACPVCITFTTSICAGYCPSMVRVLPAALPPAPQPVCTYHELRFASIRLPGCPPGVDPMVSFPVALSCRCGPCRLSSSDCGGPRAQPLACDRPPLPGLLFL.

The signal sequence occupies residues 1–20 (MEMLQGLLLWLLLSVGGVWA). 6 cysteine pairs are disulfide-bonded: C29–C77, C43–C92, C46–C130, C54–C108, C58–C110, and C113–C120. N33 carries N-linked (GlcNAc...) asparagine glycosylation.

It belongs to the glycoprotein hormones subunit beta family. Heterodimer of a common alpha chain and a unique beta chain which confers biological specificity to thyrotropin, lutropin, follitropin and gonadotropin.

Its subcellular location is the secreted. Functionally, promotes spermatogenesis and ovulation by stimulating the testes and ovaries to synthesize steroids. The chain is Lutropin subunit beta (LHB1) from Ceratotherium simum (White rhinoceros).